The chain runs to 26 residues: 83 kDa hypersensitivity protein (26 aa).

Positions 1-26 are disordered; it reads FTPEDFISAPRRGEAIPDPKGELAVF. Residues 11 to 26 are compositionally biased toward basic and acidic residues; it reads RRGEAIPDPKGELAVF.

The chain is 83 kDa hypersensitivity protein from Trichophyton tonsurans (Scalp ringworm fungus).